The primary structure comprises 189 residues: Ion-translocating oxidoreductase complex subunit B (189 aa).

Residues 1–26 form a hydrophobic region; it reads MSAIVIAIVVLTILALVFGVLLGFAA. The 59-residue stretch at 32-90 folds into the 4Fe-4S domain; sequence EGNPLTDQIEALLPQTQCGQCGYPGCRPYAEAIANGDKVNKCPPGGAATMEKLADLMGV. Positions 49, 52, 57, 73, 114, 117, 120, 124, 144, 147, 150, and 154 each coordinate [4Fe-4S] cluster. 2 consecutive 4Fe-4S ferredoxin-type domains span residues 105–134 and 135–164; these read KVAY…GSGK and LMHT…MLPV.

Belongs to the 4Fe4S bacterial-type ferredoxin family. RnfB subfamily. As to quaternary structure, the complex is composed of six subunits: RnfA, RnfB, RnfC, RnfD, RnfE and RnfG. [4Fe-4S] cluster serves as cofactor.

The protein localises to the cell inner membrane. Part of a membrane-bound complex that couples electron transfer with translocation of ions across the membrane. The polypeptide is Ion-translocating oxidoreductase complex subunit B (Shewanella pealeana (strain ATCC 700345 / ANG-SQ1)).